The primary structure comprises 572 residues: Proline--tRNA ligase (572 aa).

This sequence belongs to the class-II aminoacyl-tRNA synthetase family. ProS type 1 subfamily. As to quaternary structure, homodimer.

The protein resides in the cytoplasm. It catalyses the reaction tRNA(Pro) + L-proline + ATP = L-prolyl-tRNA(Pro) + AMP + diphosphate. Catalyzes the attachment of proline to tRNA(Pro) in a two-step reaction: proline is first activated by ATP to form Pro-AMP and then transferred to the acceptor end of tRNA(Pro). As ProRS can inadvertently accommodate and process non-cognate amino acids such as alanine and cysteine, to avoid such errors it has two additional distinct editing activities against alanine. One activity is designated as 'pretransfer' editing and involves the tRNA(Pro)-independent hydrolysis of activated Ala-AMP. The other activity is designated 'posttransfer' editing and involves deacylation of mischarged Ala-tRNA(Pro). The misacylated Cys-tRNA(Pro) is not edited by ProRS. This Erwinia tasmaniensis (strain DSM 17950 / CFBP 7177 / CIP 109463 / NCPPB 4357 / Et1/99) protein is Proline--tRNA ligase.